We begin with the raw amino-acid sequence, 488 residues long: Membrane-bound lytic murein transglycosylase F (488 aa).

The first 25 residues, 1–25 (MFARPAIRMRCATGLLAIGTLLMLA), serve as a signal peptide directing secretion. The tract at residues 26-269 (GCGEEPKPSV…RLKERYYGHV (244 aa)) is non-LT domain. The tract at residues 270–488 (DVLGYVGAYT…RTLDEQTPPL (219 aa)) is LT domain. E316 is an active-site residue.

The protein in the N-terminal section; belongs to the bacterial solute-binding protein 3 family. It in the C-terminal section; belongs to the transglycosylase Slt family.

Its subcellular location is the cell outer membrane. The enzyme catalyses Exolytic cleavage of the (1-&gt;4)-beta-glycosidic linkage between N-acetylmuramic acid (MurNAc) and N-acetylglucosamine (GlcNAc) residues in peptidoglycan, from either the reducing or the non-reducing ends of the peptidoglycan chains, with concomitant formation of a 1,6-anhydrobond in the MurNAc residue.. Its function is as follows. Murein-degrading enzyme that degrades murein glycan strands and insoluble, high-molecular weight murein sacculi, with the concomitant formation of a 1,6-anhydromuramoyl product. Lytic transglycosylases (LTs) play an integral role in the metabolism of the peptidoglycan (PG) sacculus. Their lytic action creates space within the PG sacculus to allow for its expansion as well as for the insertion of various structures such as secretion systems and flagella. This is Membrane-bound lytic murein transglycosylase F from Ectopseudomonas mendocina (strain ymp) (Pseudomonas mendocina).